A 480-amino-acid polypeptide reads, in one-letter code: UDP-glycosyltransferase 71C5 (480 aa).

UDP-alpha-D-glucose contacts are provided by residues serine 290, 349 to 351 (APQ), 366 to 374 (HCGWNSVQE), and 388 to 391 (YAEQ).

The protein belongs to the UDP-glycosyltransferase family.

Its function is as follows. Possesses low quercetin 3-O-glucosyltransferase activity in vitro. This is UDP-glycosyltransferase 71C5 (UGT71C5) from Arabidopsis thaliana (Mouse-ear cress).